We begin with the raw amino-acid sequence, 329 residues long: Biotin synthase (329 aa).

A Radical SAM core domain is found at 48 to 278; it reads FVGDKVFLCS…TKRISICGGR (231 aa). Positions 66, 70, and 73 each coordinate [4Fe-4S] cluster. Positions 143 and 203 each coordinate [2Fe-2S] cluster.

Belongs to the radical SAM superfamily. Biotin synthase family. Homodimer. Requires [4Fe-4S] cluster as cofactor. The cofactor is [2Fe-2S] cluster.

The catalysed reaction is (4R,5S)-dethiobiotin + (sulfur carrier)-SH + 2 reduced [2Fe-2S]-[ferredoxin] + 2 S-adenosyl-L-methionine = (sulfur carrier)-H + biotin + 2 5'-deoxyadenosine + 2 L-methionine + 2 oxidized [2Fe-2S]-[ferredoxin]. The protein operates within cofactor biosynthesis; biotin biosynthesis; biotin from 7,8-diaminononanoate: step 2/2. Its function is as follows. Catalyzes the conversion of dethiobiotin (DTB) to biotin by the insertion of a sulfur atom into dethiobiotin via a radical-based mechanism. The sequence is that of Biotin synthase from Geotalea daltonii (strain DSM 22248 / JCM 15807 / FRC-32) (Geobacter daltonii).